The chain runs to 278 residues: Biotin synthase (278 aa).

The region spanning 1 to 227 is the Radical SAM core domain; sequence MQIMLCAISN…QSVVMVAGGR (227 aa). [4Fe-4S] cluster contacts are provided by Cys16, Cys20, and Cys23. The [2Fe-2S] cluster site is built by Cys60, Asn96, and Cys154.

It belongs to the radical SAM superfamily. Biotin synthase family. Homodimer. [4Fe-4S] cluster serves as cofactor. Requires [2Fe-2S] cluster as cofactor.

It catalyses the reaction (4R,5S)-dethiobiotin + (sulfur carrier)-SH + 2 reduced [2Fe-2S]-[ferredoxin] + 2 S-adenosyl-L-methionine = (sulfur carrier)-H + biotin + 2 5'-deoxyadenosine + 2 L-methionine + 2 oxidized [2Fe-2S]-[ferredoxin]. It functions in the pathway cofactor biosynthesis; biotin biosynthesis; biotin from 7,8-diaminononanoate: step 2/2. Catalyzes the conversion of dethiobiotin (DTB) to biotin by the insertion of a sulfur atom into dethiobiotin via a radical-based mechanism. This chain is Biotin synthase, found in Campylobacter jejuni subsp. jejuni serotype O:2 (strain ATCC 700819 / NCTC 11168).